The following is a 264-amino-acid chain: Glucosamine-6-phosphate deaminase (264 aa).

Asp67 functions as the Proton acceptor; for enolization step in the catalytic mechanism. Asn136 serves as the catalytic For ring-opening step. His138 (proton acceptor; for ring-opening step) is an active-site residue. Glu143 serves as the catalytic For ring-opening step.

The protein belongs to the glucosamine/galactosamine-6-phosphate isomerase family. NagB subfamily. In terms of assembly, homohexamer.

It carries out the reaction alpha-D-glucosamine 6-phosphate + H2O = beta-D-fructose 6-phosphate + NH4(+). It participates in amino-sugar metabolism; N-acetylneuraminate degradation; D-fructose 6-phosphate from N-acetylneuraminate: step 5/5. Catalyzes the reversible isomerization-deamination of glucosamine 6-phosphate (GlcN6P) to form fructose 6-phosphate (Fru6P) and ammonium ion. This chain is Glucosamine-6-phosphate deaminase, found in Shewanella woodyi (strain ATCC 51908 / MS32).